The sequence spans 480 residues: MNMHDFSKTKILVVGDVMLDQYWSGRAGRISPEAPVPVVKVADENVRAGGAANVALNIADLGADVNLMGVIGQDSFGQQLNQVLEQAGVASNWVYSESGTICKLRVLSHHQQLIRMDFENAVPELSAKSLAKLVAEKVADYDVLVISDYAKGALQFVEEMIQAAKSQQVPVLIDPKGNDFSRYAGATLVKPNQGEFELIVGVCADQDDLIEKAKQLIQEINIDALLVTRSEHGMALIEKDAGATILKSRAQEVFDVTGAGDTVIATLATAFGSGLSMPKSVKLANEAASIVVRKVGTSTVSKVELEEQLNASMRHQGYASMSEDEVHSLVQIAQSKGEKVVFTNGCFDLLHSGHVRYLNEAARQGDRLVVAVNSDESVKLLKGDSRPIVELAGRMELLSALSCVDWVVPFNEETPERLICKLAPDVLVKGGDYKPDEIAGAQCVWDKGGEVAVLSFWEGYSTTRMVDKIQEAEIKEGAAQ.

Residues 1–316 are ribokinase; the sequence is MNMHDFSKTK…EQLNASMRHQ (316 aa). 192 to 195 serves as a coordination point for ATP; it reads NQGE. Aspartate 261 is a catalytic residue. Residues 342–480 are cytidylyltransferase; the sequence is FTNGCFDLLH…EAEIKEGAAQ (139 aa).

In the N-terminal section; belongs to the carbohydrate kinase PfkB family. It in the C-terminal section; belongs to the cytidylyltransferase family. In terms of assembly, homodimer.

The catalysed reaction is D-glycero-beta-D-manno-heptose 7-phosphate + ATP = D-glycero-beta-D-manno-heptose 1,7-bisphosphate + ADP + H(+). The enzyme catalyses D-glycero-beta-D-manno-heptose 1-phosphate + ATP + H(+) = ADP-D-glycero-beta-D-manno-heptose + diphosphate. The protein operates within nucleotide-sugar biosynthesis; ADP-L-glycero-beta-D-manno-heptose biosynthesis; ADP-L-glycero-beta-D-manno-heptose from D-glycero-beta-D-manno-heptose 7-phosphate: step 1/4. Its pathway is nucleotide-sugar biosynthesis; ADP-L-glycero-beta-D-manno-heptose biosynthesis; ADP-L-glycero-beta-D-manno-heptose from D-glycero-beta-D-manno-heptose 7-phosphate: step 3/4. Catalyzes the phosphorylation of D-glycero-D-manno-heptose 7-phosphate at the C-1 position to selectively form D-glycero-beta-D-manno-heptose-1,7-bisphosphate. In terms of biological role, catalyzes the ADP transfer from ATP to D-glycero-beta-D-manno-heptose 1-phosphate, yielding ADP-D-glycero-beta-D-manno-heptose. This is Bifunctional protein HldE from Hydrogenovibrio crunogenus (strain DSM 25203 / XCL-2) (Thiomicrospira crunogena).